Consider the following 531-residue polypeptide: Serine-type carboxypeptidase F (531 aa).

A signal peptide spans 1 to 25 (MLFRSLLSTAVLAVSLCTDNASAAK). Residue asparagine 20 is glycosylated (N-linked (GlcNAc...) asparagine). Positions 26-52 (HGRFGQKARDAMNIAKRSANAVKHSLK) are excised as a propeptide. Residues asparagine 63, asparagine 94, and asparagine 155 are each glycosylated (N-linked (GlcNAc...) asparagine). Serine 211 is a catalytic residue. N-linked (GlcNAc...) asparagine glycans are attached at residues asparagine 228, asparagine 271, asparagine 309, and asparagine 378. Aspartate 430 is a catalytic residue. Residues asparagine 436 and asparagine 444 are each glycosylated (N-linked (GlcNAc...) asparagine). The active site involves histidine 507.

This sequence belongs to the peptidase S10 family. Monomer.

Inhibited by DFP, and Hg(Cl)2. In terms of biological role, removes any amino acid from the C-terminus of a long peptide. Digests preferentially peptides containing a positively charged residue in P1' position, as well as arginine, lysine or phenylalanine in P1 position of ester substrate. Also catalyzes peptide synthesis. This is Serine-type carboxypeptidase F (pepF) from Aspergillus niger.